A 253-amino-acid polypeptide reads, in one-letter code: Sulfate transporter CysZ (253 aa).

Transmembrane regions (helical) follow at residues 31–51 (FVIL…WWLF), 75–95 (LLWP…FSTI), 151–171 (IVLL…PVLW), and 222–242 (IPLL…AMWV).

The protein belongs to the CysZ family.

It localises to the cell inner membrane. Its function is as follows. High affinity, high specificity proton-dependent sulfate transporter, which mediates sulfate uptake. Provides the sulfur source for the cysteine synthesis pathway. The chain is Sulfate transporter CysZ from Shigella flexneri serotype 5b (strain 8401).